A 547-amino-acid polypeptide reads, in one-letter code: Fimbria adhesin EcpD (547 aa).

The first 20 residues, 1–20, serve as a signal peptide directing secretion; it reads MRVNLLIAMIIFALIWPATA.

The protein belongs to the EcpD/MatE family. Forms polymers. Interacts with EcpA.

It localises to the fimbrium. Functionally, part of the ecpRABCDE operon, which encodes the E.coli common pilus (ECP). ECP is found in both commensal and pathogenic strains and plays a dual role in early-stage biofilm development and host cell recognition. Tip pilus adhesin, which is required for assembly of EcpA into fibers. In Escherichia coli O127:H6 (strain E2348/69 / EPEC), this protein is Fimbria adhesin EcpD (ecpD).